Here is a 303-residue protein sequence, read N- to C-terminus: Protoheme IX farnesyltransferase (303 aa).

7 helical membrane passes run 25-45 (MGLVQGNLIPAFAGSWLAIVL), 54-74 (IPQILMMLVGSTLIMGGACAL), 118-138 (LLFALNIPSGVIGLLGIVGYV), 151-171 (WNTVIGSFPGAVPPLIGWTAI), 177-197 (LVAVALFLVIFCWQPIHFYAL), 230-250 (LVVLLPLPFLLSSLGVTFIVL), and 280-300 (FIYSLNYLVVFFVLVVVISLI).

Belongs to the UbiA prenyltransferase family. Protoheme IX farnesyltransferase subfamily. In terms of assembly, interacts with CtaA.

Its subcellular location is the cell membrane. The catalysed reaction is heme b + (2E,6E)-farnesyl diphosphate + H2O = Fe(II)-heme o + diphosphate. It functions in the pathway porphyrin-containing compound metabolism; heme O biosynthesis; heme O from protoheme: step 1/1. Functionally, converts heme B (protoheme IX) to heme O by substitution of the vinyl group on carbon 2 of heme B porphyrin ring with a hydroxyethyl farnesyl side group. This chain is Protoheme IX farnesyltransferase, found in Staphylococcus saprophyticus subsp. saprophyticus (strain ATCC 15305 / DSM 20229 / NCIMB 8711 / NCTC 7292 / S-41).